We begin with the raw amino-acid sequence, 270 residues long: Probable inositol 1-monophosphatase ImpA (270 aa).

The Mg(2+) site is built by Glu-69, Asp-85, Ile-87, and Asp-88. Residue Glu-69 coordinates substrate. Residues 87-90 (IDGT), Arg-187, and Asp-216 contribute to the substrate site. Asp-216 is a Mg(2+) binding site.

Belongs to the inositol monophosphatase superfamily. Requires Mg(2+) as cofactor.

It carries out the reaction a myo-inositol phosphate + H2O = myo-inositol + phosphate. It participates in polyol metabolism; myo-inositol biosynthesis; myo-inositol from D-glucose 6-phosphate: step 2/2. Functionally, catalyzes the dephosphorylation of inositol 1-phosphate (I-1-P) to yield free myo-inositol, a key metabolite in mycobacteria. This chain is Probable inositol 1-monophosphatase ImpA (impA), found in Mycobacterium tuberculosis (strain ATCC 25618 / H37Rv).